The primary structure comprises 354 residues: Uroporphyrinogen decarboxylase (354 aa).

Residues 25–29, aspartate 75, tyrosine 152, threonine 207, and histidine 330 contribute to the substrate site; that span reads RQAGR.

This sequence belongs to the uroporphyrinogen decarboxylase family. As to quaternary structure, homodimer.

Its subcellular location is the cytoplasm. It catalyses the reaction uroporphyrinogen III + 4 H(+) = coproporphyrinogen III + 4 CO2. It participates in porphyrin-containing compound metabolism; protoporphyrin-IX biosynthesis; coproporphyrinogen-III from 5-aminolevulinate: step 4/4. Catalyzes the decarboxylation of four acetate groups of uroporphyrinogen-III to yield coproporphyrinogen-III. The polypeptide is Uroporphyrinogen decarboxylase (Xanthomonas oryzae pv. oryzae (strain MAFF 311018)).